We begin with the raw amino-acid sequence, 103 residues long: Small ribosomal subunit protein uS10 (103 aa).

Belongs to the universal ribosomal protein uS10 family. Part of the 30S ribosomal subunit.

Its function is as follows. Involved in the binding of tRNA to the ribosomes. In Ralstonia pickettii (strain 12J), this protein is Small ribosomal subunit protein uS10.